Here is a 316-residue protein sequence, read N- to C-terminus: Ribosomal RNA small subunit methyltransferase H (316 aa).

S-adenosyl-L-methionine-binding positions include 37–39 (GGH), D56, F83, D106, and H113. Positions 276–316 (PILPSEEETKENPASRSAKLRVLRKTKSADKKYKKENSKEE) are disordered. Residues 302–316 (KSADKKYKKENSKEE) show a composition bias toward basic and acidic residues.

It belongs to the methyltransferase superfamily. RsmH family.

Its subcellular location is the cytoplasm. It carries out the reaction cytidine(1402) in 16S rRNA + S-adenosyl-L-methionine = N(4)-methylcytidine(1402) in 16S rRNA + S-adenosyl-L-homocysteine + H(+). Specifically methylates the N4 position of cytidine in position 1402 (C1402) of 16S rRNA. The sequence is that of Ribosomal RNA small subunit methyltransferase H from Leptospira borgpetersenii serovar Hardjo-bovis (strain L550).